The following is a 223-amino-acid chain: Oxaloacetate tautomerase FAHD1, mitochondrial (223 aa).

Residues 1 to 30 (MATSMIQRMFKQGTKIVCVGRNYAAHAKEL) constitute a mitochondrion transit peptide. Residues Glu67, Glu69, and Asp98 each coordinate Mg(2+).

It belongs to the FAH family. The cofactor is Mg(2+). It depends on Mn(2+) as a cofactor.

Its subcellular location is the mitochondrion. It catalyses the reaction oxaloacetate = enol-oxaloacetate. In terms of biological role, tautomerase that converts enol-oxaloacetate, a strong inhibitor of succinate dehydrogenase, to the physiological keto form of oxaloacetate. The sequence is that of Oxaloacetate tautomerase FAHD1, mitochondrial from Arabidopsis thaliana (Mouse-ear cress).